The following is a 238-amino-acid chain: Ribonuclease PH (238 aa).

Residues Arg-86 and 124-126 (GTR) contribute to the phosphate site.

Belongs to the RNase PH family. Homohexameric ring arranged as a trimer of dimers.

It carries out the reaction tRNA(n+1) + phosphate = tRNA(n) + a ribonucleoside 5'-diphosphate. Functionally, phosphorolytic 3'-5' exoribonuclease that plays an important role in tRNA 3'-end maturation. Removes nucleotide residues following the 3'-CCA terminus of tRNAs; can also add nucleotides to the ends of RNA molecules by using nucleoside diphosphates as substrates, but this may not be physiologically important. Probably plays a role in initiation of 16S rRNA degradation (leading to ribosome degradation) during starvation. The polypeptide is Ribonuclease PH (Brucella abortus (strain S19)).